Reading from the N-terminus, the 179-residue chain is Large ribosomal subunit protein uL5 (179 aa).

It belongs to the universal ribosomal protein uL5 family. As to quaternary structure, part of the 50S ribosomal subunit; part of the 5S rRNA/L5/L18/L25 subcomplex. Contacts the 5S rRNA and the P site tRNA. Forms a bridge to the 30S subunit in the 70S ribosome.

Its function is as follows. This is one of the proteins that bind and probably mediate the attachment of the 5S RNA into the large ribosomal subunit, where it forms part of the central protuberance. In the 70S ribosome it contacts protein S13 of the 30S subunit (bridge B1b), connecting the 2 subunits; this bridge is implicated in subunit movement. Contacts the P site tRNA; the 5S rRNA and some of its associated proteins might help stabilize positioning of ribosome-bound tRNAs. The polypeptide is Large ribosomal subunit protein uL5 (Paraburkholderia phymatum (strain DSM 17167 / CIP 108236 / LMG 21445 / STM815) (Burkholderia phymatum)).